A 164-amino-acid chain; its full sequence is Bacterial microcompartment shell protein EutK (164 aa).

Residues 4 to 88 form the BMC domain; that stretch reads ALGLLEVDGM…PEEDTQWLIG (85 aa). Residues 108–164 form the EutK-Ctail domain; it reads EFAEALLALLASVRQGMTAGEVAAHFGWPLEQARNVLEQLFSDGALRKRSSRYRIKN.

This sequence belongs to the bacterial microcompartments protein family. Monomeric in solution.

It localises to the bacterial microcompartment. The protein operates within amine and polyamine degradation; ethanolamine degradation. A component of the bacterial microcompartment (BMC) shell dedicated to ethanolamine degradation. Expression of eutK, eutL, eutM, eutN, eutS (eutSMNLK) in E.coli leads to formation of a single BMC. Coexpression of eutQ with eutSMNLK permits E.coli to make cells with more than one mobile BMC, as is usual in vivo. Its function is as follows. The ethanolamine (EA) catabolic bacterial microcompartment (BMC) probably concentrates low levels of ethanolamine catabolic enzymes, concentrates volatile reaction intermediates, keeps the level of toxic acetaldehyde low, generates enough acetyl-CoA to support cell growth, and maintains a pool of free coenzyme A (CoA) and NAD. Deletion of BMC genes (eutK, eutL, eutM) restores growth of eutD deletions, suggesting there are dedicated pools of coenzyme A (CoA) and NAD in the BMC. Functionally, expression of the eut operon allows this bacteria to use ethanolamine as a carbon, nitrogen and energy source. It relies on cobalamin (vitamin B12) both as a cofactor for the ethanolamine ammonia-lyase (EAL) activity and to induce the operon. EA enhances bacterial survival in macrophages in a concentration-dependent manner, suggesting it is an important nutrient during infection. The protein is Bacterial microcompartment shell protein EutK (eutK) of Salmonella typhimurium (strain LT2 / SGSC1412 / ATCC 700720).